The chain runs to 129 residues: MNLIQTLEKEQFDKLSAGKTIPEFGPGDTVIVNVKVVEGERSRVQAYEGVCIGRSGGGINESFTVRKISYGEGVERVFPLLSPMIDSIKVVRRGKVRRAKLYYLRNLRGKSARIVEKKQDRTAAVAAAE.

In terms of biological role, this protein is located at the 30S-50S ribosomal subunit interface and may play a role in the structure and function of the aminoacyl-tRNA binding site. The polypeptide is Large ribosomal subunit protein bL19 (Rhodopseudomonas palustris (strain ATCC BAA-98 / CGA009)).